The following is a 139-amino-acid chain: uncharacterized protein (139 aa).

A helical transmembrane segment spans residues 43 to 59; sequence FGVISTLIAIFIGAFWL.

The protein localises to the membrane. This is an uncharacterized protein from Haemophilus influenzae (strain ATCC 51907 / DSM 11121 / KW20 / Rd).